The primary structure comprises 372 residues: Zinc finger protein dpff-1 (372 aa).

The interval 108–204 is disordered; it reads VGPTTESVSD…SRSIVKETKY (97 aa). Polar residues predominate over residues 109 to 131; the sequence is GPTTESVSDSSNDSTTIRPSRQT. The segment covering 132–141 has biased composition (basic and acidic residues); that stretch reads QIKEEYRDDY. Residues 142-158 are compositionally biased toward acidic residues; that stretch reads VLDDELSPDEFGSDEDD. Residues 184-196 show a composition bias toward polar residues; sequence TTRSSVSRLTPSR. The C2H2-type zinc finger occupies 212 to 235; the sequence is YPCDKCSAKYKSLAGLSYHQSYLH. PHD-type zinc fingers lie at residues 256 to 314 and 316 to 361; these read SCDF…CKSC and ICGT…CQVE.

Belongs to the requiem/DPF family.

The protein localises to the nucleus. It localises to the cytoplasm. In terms of biological role, probable transcription factor, involved in meiosis and stress protection. The protein is Zinc finger protein dpff-1 of Caenorhabditis elegans.